The following is a 249-amino-acid chain: 5'-nucleotidase SurE (249 aa).

4 residues coordinate a divalent metal cation: Asp-8, Asp-9, Ser-39, and Asn-91.

Belongs to the SurE nucleotidase family. A divalent metal cation is required as a cofactor.

The protein resides in the cytoplasm. The catalysed reaction is a ribonucleoside 5'-phosphate + H2O = a ribonucleoside + phosphate. In terms of biological role, nucleotidase that shows phosphatase activity on nucleoside 5'-monophosphates. In Haemophilus influenzae (strain PittGG), this protein is 5'-nucleotidase SurE.